The sequence spans 237 residues: UPF0280 protein Mthe_1297 (237 aa).

The protein belongs to the UPF0280 family.

The chain is UPF0280 protein Mthe_1297 from Methanothrix thermoacetophila (strain DSM 6194 / JCM 14653 / NBRC 101360 / PT) (Methanosaeta thermophila).